A 20-amino-acid chain; its full sequence is Ranalexin-1Ca (20 aa).

C14 and C20 are joined by a disulfide.

In terms of tissue distribution, expressed by the skin glands.

It localises to the secreted. Antibacterial activity against Gram-positive bacterium S.aureus (MIC=17 uM) and Gram-negative bacterium E.coli (MIC=4 uM). Has activity against C.albicans (MIC=14 uM). The polypeptide is Ranalexin-1Ca (Lithobates clamitans (Green frog)).